The sequence spans 319 residues: Protease HtpX homolog (319 aa).

A run of 2 helical transmembrane segments spans residues threonine 6–glycine 26 and glycine 28–serine 48. A Zn(2+)-binding site is contributed by histidine 130. Glutamate 131 is an active-site residue. Histidine 134 is a Zn(2+) binding site. A run of 2 helical transmembrane segments spans residues leucine 145–glycine 165 and proline 172–valine 192. Position 201 (glutamate 201) interacts with Zn(2+). Positions arginine 279–serine 319 are disordered.

Belongs to the peptidase M48B family. Zn(2+) is required as a cofactor.

Its subcellular location is the cell inner membrane. In Sinorhizobium fredii (strain NBRC 101917 / NGR234), this protein is Protease HtpX homolog.